The primary structure comprises 317 residues: ADP-L-glycero-D-manno-heptose-6-epimerase (317 aa).

NADP(+) is bound by residues 10–11 (FI), 31–32 (DD), Q38, K53, 75–79 (QGACS), and N92. Residue Y139 is the Proton acceptor of the active site. K143 serves as a coordination point for NADP(+). Residue N166 coordinates substrate. Residues V167 and K175 each coordinate NADP(+). The Proton acceptor role is filled by K175. Substrate contacts are provided by residues G177, H184, 198-201 (FEGV), R211, and Y275.

It belongs to the NAD(P)-dependent epimerase/dehydratase family. HldD subfamily. Homopentamer. The cofactor is NADP(+).

The catalysed reaction is ADP-D-glycero-beta-D-manno-heptose = ADP-L-glycero-beta-D-manno-heptose. Its pathway is nucleotide-sugar biosynthesis; ADP-L-glycero-beta-D-manno-heptose biosynthesis; ADP-L-glycero-beta-D-manno-heptose from D-glycero-beta-D-manno-heptose 7-phosphate: step 4/4. Functionally, catalyzes the interconversion between ADP-D-glycero-beta-D-manno-heptose and ADP-L-glycero-beta-D-manno-heptose via an epimerization at carbon 6 of the heptose. The protein is ADP-L-glycero-D-manno-heptose-6-epimerase of Shewanella frigidimarina (strain NCIMB 400).